The sequence spans 545 residues: CTP synthase (545 aa).

Residues 1 to 266 (MKTNYIFVTG…DDYICKRFSL (266 aa)) form an amidoligase domain region. Ser-14 contributes to the CTP binding site. UTP is bound at residue Ser-14. ATP-binding positions include 15 to 20 (SLGKGI) and Asp-72. Mg(2+)-binding residues include Asp-72 and Glu-140. CTP is bound by residues 147 to 149 (DIE), 187 to 192 (KTKPTQ), and Lys-223. UTP-binding positions include 187 to 192 (KTKPTQ) and Lys-223. 239–241 (KDV) lines the ATP pocket. One can recognise a Glutamine amidotransferase type-1 domain in the interval 291–542 (TIGMVGKYVE…VKAAGKYQKG (252 aa)). Gly-352 serves as a coordination point for L-glutamine. Catalysis depends on Cys-379, which acts as the Nucleophile; for glutamine hydrolysis. Residues 380–383 (LGMQ), Glu-403, and Arg-470 contribute to the L-glutamine site. Active-site residues include His-515 and Glu-517.

It belongs to the CTP synthase family. As to quaternary structure, homotetramer.

The enzyme catalyses UTP + L-glutamine + ATP + H2O = CTP + L-glutamate + ADP + phosphate + 2 H(+). It carries out the reaction L-glutamine + H2O = L-glutamate + NH4(+). It catalyses the reaction UTP + NH4(+) + ATP = CTP + ADP + phosphate + 2 H(+). It functions in the pathway pyrimidine metabolism; CTP biosynthesis via de novo pathway; CTP from UDP: step 2/2. Allosterically activated by GTP, when glutamine is the substrate; GTP has no effect on the reaction when ammonia is the substrate. The allosteric effector GTP functions by stabilizing the protein conformation that binds the tetrahedral intermediate(s) formed during glutamine hydrolysis. Inhibited by the product CTP, via allosteric rather than competitive inhibition. Its function is as follows. Catalyzes the ATP-dependent amination of UTP to CTP with either L-glutamine or ammonia as the source of nitrogen. Regulates intracellular CTP levels through interactions with the four ribonucleotide triphosphates. This Photorhabdus laumondii subsp. laumondii (strain DSM 15139 / CIP 105565 / TT01) (Photorhabdus luminescens subsp. laumondii) protein is CTP synthase.